The sequence spans 444 residues: C4-dicarboxylate transport protein 2 (444 aa).

6 helical membrane-spanning segments follow: residues 23–43 (ILYV…WLWP), 61–81 (LIKM…IAHI), 95–115 (LVYF…VANV), 162–182 (GEIL…MGLG), 198–218 (AMFG…FGAM), and 236–256 (LIAT…GIIA).

It belongs to the dicarboxylate/amino acid:cation symporter (DAACS) (TC 2.A.23) family.

Its subcellular location is the cell inner membrane. In terms of biological role, responsible for the transport of dicarboxylates such as succinate, fumarate, and malate from the periplasm across the membrane. In Bradyrhizobium diazoefficiens (strain JCM 10833 / BCRC 13528 / IAM 13628 / NBRC 14792 / USDA 110), this protein is C4-dicarboxylate transport protein 2.